Here is a 474-residue protein sequence, read N- to C-terminus: Melanopsin (474 aa).

Residues Met-1–Thr-72 lie on the Extracellular side of the membrane. N-linked (GlcNAc...) asparagine glycosylation is found at Asn-31 and Asn-35. Residues Leu-73 to Tyr-93 form a helical membrane-spanning segment. The Cytoplasmic segment spans residues Thr-94 to Met-107. The chain crosses the membrane as a helical span at residues Leu-108–Phe-128. Residues Ala-129–Lys-144 are Extracellular-facing. Cysteines 143 and 221 form a disulfide. A helical membrane pass occupies residues Phe-145–Ala-165. Over Met-166 to Ala-188 the chain is Cytoplasmic. The helical transmembrane segment at Leu-189–Trp-209 threads the bilayer. Over Ser-210 to Leu-238 the chain is Extracellular. Residues Leu-239–Phe-259 traverse the membrane as a helical segment. The Cytoplasmic portion of the chain corresponds to Arg-260 to Lys-293. Residues Val-294–Leu-314 form a helical membrane-spanning segment. Residues Val-315–Arg-355 are Extracellular-facing. Lys-337 carries the post-translational modification N6-(retinylidene)lysine. The helical transmembrane segment at Ala-356–Ser-372 threads the bilayer. Topologically, residues Gly-373–Met-474 are cytoplasmic. Positions Ala-428–Met-474 are disordered.

It belongs to the G-protein coupled receptor 1 family. Opsin subfamily. As to expression, eye; expressed in a photosensitive subset of retinal ganglion cells (at protein level).

The protein resides in the cell membrane. It localises to the cell projection. It is found in the axon. The protein localises to the dendrite. Its subcellular location is the perikaryon. Functionally, photoreceptor that binds cis-retinaldehydes. Contributes to pupillar reflex, photoentrainment and other non-image forming responses to light. May be involved in the optokinetic visual tracking response. May be involved in the regulation of retinal hyaloid vessel growth and regression. The sequence is that of Melanopsin from Rattus norvegicus (Rat).